A 200-amino-acid polypeptide reads, in one-letter code: Ras-related protein Rab5 (200 aa).

Residues Gly17 to Ser25, Leu36 to Thr42, Asp65 to Gln69, Asn123 to Asp126, and Ser153 to Lys155 contribute to the GTP site. An Effector region motif is present at residues Gln39–Phe47. Residues Cys198 and Cys199 are each lipidated (S-geranylgeranyl cysteine).

The protein belongs to the small GTPase superfamily. Rab family. As to expression, virtually not expressed in leaves, higher in stems and roots, and highest in flowers.

It is found in the cell membrane. Its function is as follows. Protein transport. Probably involved in vesicular traffic. The chain is Ras-related protein Rab5 (RAB5) from Nicotiana tabacum (Common tobacco).